The primary structure comprises 436 residues: MPKLKVTRGARNQERHAPLAEQILAGDAVRAGTREKRRRHGVEEEEEYVGPRLSRRILQQARQQQEELETEHATGDRPAKPRERATRLGPGVPQDGSDEEDEEWPTLEKAAKMTVVNHQAEVVVDPEDERAIEMFMNKNPPVRRTLADIIMEKLTEKQTEVETVMSEVSGFPMPQLDPRVLEVYRGVREVLCKYRSGILPKAFKIIPALSNWEQILYVTEPEAWTAAAMYQATRIFASNLKERMAQRFYNLVLLPRVRDDIAEYKRLNFHLYMALKKALFKPGAWFKGILIPLCESGTCTLREAIIVGSIISKCSIPVLHSSAAMLKIAEMEYSGASSIFLRLLLDKKYALPYRVLDALVFHFLAFRTEKRQLPVLWHQCLLTLAQRYKADLATEQKEALLELLRLQPHPQLSPEIRRELQSAVPRDVEDVVVTME.

The tract at residues 1–105 is disordered; it reads MPKLKVTRGA…GSDEEDEEWP (105 aa). Position 54 is a phosphoserine (Ser-54). Residues 70–86 show a composition bias toward basic and acidic residues; it reads TEHATGDRPAKPRERAT. Residues 96-105 are compositionally biased toward acidic residues; the sequence is GSDEEDEEWP. Position 97 is a phosphoserine (Ser-97). At Thr-155 the chain carries Phosphothreonine. Phosphoserine occurs at positions 166 and 413.

It belongs to the bystin family. Binds trophinin, tastin and cytokeratins.

The protein localises to the cytoplasm. It is found in the nucleus. The protein resides in the nucleolus. In terms of biological role, required for processing of 20S pre-rRNA precursor and biogenesis of 40S ribosomal subunits. The polypeptide is Bystin (Rattus norvegicus (Rat)).